The chain runs to 538 residues: Syncytin-2 (538 aa).

The N-terminal stretch at 1-15 (MGLLLLVLILTPSLA) is a signal peptide. At 16-478 (AYRHPDFPLL…GWLNWEGTWK (463 aa)) the chain is on the extracellular side. Residues 43-46 (CWLC) carry the CXXC motif. Cystine bridges form between Cys43–Cys46, Cys43–Cys439, and Cys431–Cys438. Asn133, Asn146, Asn177, Asn220, Asn241, Asn247, Asn312, and Asn332 each carry an N-linked (GlcNAc...) asparagine glycan. Positions 354-374 (FIPLLAGLGILAGTGTGIAGI) are fusion peptide. The CKS-17 signature appears at 414–430 (LQNRRGLDMLTAAQGGI). The CX6CC signature appears at 431-439 (CLALDEKCC). A glycan (N-linked (GlcNAc...) asparagine) is linked at Asn443. Residues 479 to 499 (WFSWVLPLTGPLVSLLLLLLF) traverse the membrane as a helical segment. At 500–538 (GPCLLNLITQFVSSRLQAIKLQTNLSAGRHPRNIQESPF) the chain is on the cytoplasmic side.

This sequence belongs to the gamma type-C retroviral envelope protein family. HERV class-I FRD env subfamily. As to quaternary structure, the surface and transmembrane proteins form a heterodimer. They are attached by non-covalent interactions or by a labile interchain disulfide bond. Specific enzymatic cleavages in vivo yield the mature SU and TM proteins. Post-translationally, the CXXC motif is highly conserved across a broad range of retroviral envelope proteins. It is thought to participate in the formation of a labile disulfide bond possibly with the CX6CC motif present in the transmembrane protein.

The protein resides in the virion. It localises to the cell membrane. This endogenous retroviral envelope protein has retained its original fusogenic properties and participates in trophoblast fusion and the formation of a syncytium during placenta morphogenesis. The interaction with MFSD2A is apparently important for this process. In terms of biological role, endogenous envelope proteins may have kept, lost or modified their original function during evolution but this one can still make pseudotypes with MLV, HIV-1 or SIV-1 virions and confer infectivity. Retroviral envelope proteins mediate receptor recognition and membrane fusion during early infection. The surface protein mediates receptor recognition, while the transmembrane protein anchors the envelope heterodimer to the viral membrane through one transmembrane domain. The other hydrophobic domain, called fusion peptide, mediates fusion of the viral membrane with the target cell membrane. The sequence is that of Syncytin-2 (ERVFRD-1) from Pan troglodytes (Chimpanzee).